The chain runs to 258 residues: MSVEDTQPLITHLIELRKRLLNCIISVIVIFLCLVYFANDIYHLVSAPLIKQLPQGSTMIATDVASPFFTPIKLTFMVSLILSAPVILYQVWAFIAPALYKHERRLVVPLLVSSSLLFYIGMAFAYFVVFPLAFGFLANTAPEGVQVSTDIASYLSFVMALFMAFGVSFEVPVAIVLLCWMGITSPEDLRKKRPYVLVGAFVVGMLLTPPDVFSQTLLAIPMYCLFEIGVFFSRFYVGKGRNREEENDAEAESEKTEE.

Topologically, residues 2 to 23 (SVEDTQPLITHLIELRKRLLNC) are cytoplasmic. Residues 24-44 (IISVIVIFLCLVYFANDIYHL) traverse the membrane as a helical segment. The Periplasmic segment spans residues 45–75 (VSAPLIKQLPQGSTMIATDVASPFFTPIKLT). A helical membrane pass occupies residues 76–96 (FMVSLILSAPVILYQVWAFIA). Residues 97 to 115 (PALYKHERRLVVPLLVSSS) lie on the Cytoplasmic side of the membrane. The helical transmembrane segment at 116–136 (LLFYIGMAFAYFVVFPLAFGF) threads the bilayer. Topologically, residues 137–156 (LANTAPEGVQVSTDIASYLS) are periplasmic. A helical membrane pass occupies residues 157-177 (FVMALFMAFGVSFEVPVAIVL). Over 178–192 (LCWMGITSPEDLRKK) the chain is Cytoplasmic. The helical transmembrane segment at 193–210 (RPYVLVGAFVVGMLLTPP) threads the bilayer. Residue Asp-211 is a topological domain, periplasmic. Residues 212–232 (VFSQTLLAIPMYCLFEIGVFF) traverse the membrane as a helical segment. Topologically, residues 233 to 258 (SRFYVGKGRNREEENDAEAESEKTEE) are cytoplasmic.

This sequence belongs to the TatC family. The Tat system comprises two distinct complexes: a TatABC complex, containing multiple copies of TatA, TatB and TatC subunits, and a separate TatA complex, containing only TatA subunits. Substrates initially bind to the TatABC complex, which probably triggers association of the separate TatA complex to form the active translocon.

The protein resides in the cell inner membrane. In terms of biological role, part of the twin-arginine translocation (Tat) system that transports large folded proteins containing a characteristic twin-arginine motif in their signal peptide across membranes. Together with TatB, TatC is part of a receptor directly interacting with Tat signal peptides. The protein is Sec-independent protein translocase protein TatC of Escherichia coli O6:H1 (strain CFT073 / ATCC 700928 / UPEC).